Here is a 291-residue protein sequence, read N- to C-terminus: Tumor necrosis factor ligand superfamily member 10 (291 aa).

Residues 1 to 17 (MPSSGALKDLSFSQHFR) lie on the Cytoplasmic side of the membrane. Residues 18 to 38 (MMVICIVLLQVLLQAVSVAVT) form a helical; Signal-anchor for type II membrane protein membrane-spanning segment. The Extracellular portion of the chain corresponds to 39 to 291 (YMYFTNEMKQ…ASFFGAFLIN (253 aa)). Asn-52 carries an N-linked (GlcNAc...) asparagine glycan. Positions 126–290 (VAAHITGITR…EASFFGAFLI (165 aa)) constitute a THD domain. Zn(2+) is bound at residue Cys-240.

It belongs to the tumor necrosis factor family. Homotrimer. One TNFSF10 homotrimer interacts with three TNFSF10A mononers. One TNFSF10 homotrimer interacts with three TNFSF10B mononers. Tyrosine phosphorylated by PKDCC/VLK. Widespread.

It localises to the cell membrane. It is found in the secreted. In terms of biological role, cytokine that binds to TNFRSF10A/TRAILR1, TNFRSF10B/TRAILR2, TNFRSF10C/TRAILR3, TNFRSF10D/TRAILR4 and possibly also to TNFRSF11B/OPG. Induces apoptosis. Its activity may be modulated by binding to the decoy receptors TNFRSF10C/TRAILR3, TNFRSF10D/TRAILR4 and TNFRSF11B/OPG that cannot induce apoptosis. The protein is Tumor necrosis factor ligand superfamily member 10 (Tnfsf10) of Mus musculus (Mouse).